The primary structure comprises 683 residues: Cyclic nucleotide-gated channel alpha-1 (683 aa).

The Cytoplasmic segment spans residues 1–160 (MKTNIINTWH…PSGNMYYNWL (160 aa)). Residues 34–144 (ACSSFSDNDN…PKEKKEEEKK (111 aa)) are disordered. Over residues 105-144 (SKADDKKESKKDPEKKKKKEKEKEKKKEEKPKEKKEEEKK) the composition is skewed to basic and acidic residues. A helical membrane pass occupies residues 161-182 (FCITLPVMYNWTMIIARACFDE). At 183–192 (LQSDYLEYWL) the chain is on the extracellular side. A helical membrane pass occupies residues 193 to 213 (IFDYVSDVVYLADMFVRTRTG). Over 214-238 (YLEQGLLVKDELKLIEKYKANLQFK) the chain is Cytoplasmic. Residues 239 to 257 (LDVLSVIPTDLLYFKFGWN) form a helical membrane-spanning segment. Topologically, residues 258 to 262 (YPEIR) are extracellular. Residues 263–281 (LNRLLRISRMFEFFQRTET) traverse the membrane as a helical segment. Topologically, residues 282 to 288 (RTNYPNI) are cytoplasmic. Positions 286-394 (PNIFRISNLV…GNIGSMISNM (109 aa)) are ion conduction pathway. Residues 289 to 312 (FRISNLVMYIVIIIHWNACVYYSI) traverse the membrane as a helical segment. Residues 313-335 (SKAIGFGNDTWVYPDVNDPEFGR) lie on the Extracellular side of the membrane. Asparagine 320 is a glycosylation site (N-linked (GlcNAc...) asparagine). The next 2 helical transmembrane spans lie at 336–370 (LARK…VFVV) and 371–395 (VDFL…SNMN). The selectivity filter stretch occupies residues 353–356 (TIGE). The segment at 396 to 472 (AARAEFQSRV…DTLKKVRIFA (77 aa)) is C-linker. Over 396 to 683 (AARAEFQSRV…ESEPTESLQG (288 aa)) the chain is Cytoplasmic. A cyclic nucleotide-binding domain region spans residues 476–596 (AGLLVELVLK…EEKGRQILMK (121 aa)). 3',5'-cyclic GMP contacts are provided by glycine 536, serine 539, arginine 552, and threonine 553. The 3',5'-cyclic AMP site is built by arginine 552 and threonine 553. Residues 614-668 (LEEKVTRMEGSVDLLQTRFARILAEYESMQQKLKQRLTKVEKFLKPLIETEFSAL) are a coiled coil.

The protein belongs to the cyclic nucleotide-gated cation channel (TC 1.A.1.5) family. CNGA1 subfamily. Forms heterotetrameric channels composed of CNGA1 and CNGB1 subunits with 3:1 stoichiometry. May also form cyclic nucleotide-activated homotetrameric channels, that are efficiently activated by saturating cGMP, but poorly activated by saturating cAMP compared to the heterotetramer with CNGB1. The channel binds Ca(2+)-bound CALM1 via CaM1 and CaM2 regions of the CNGB1 subunit; this interaction modulates the affinity of the channel for cNMPs in response to intracellular Ca(2+) levels. As to expression, rod cells in the retina.

Its subcellular location is the cell membrane. It catalyses the reaction Ca(2+)(in) = Ca(2+)(out). The catalysed reaction is Na(+)(in) = Na(+)(out). It carries out the reaction K(+)(in) = K(+)(out). The enzyme catalyses NH4(+)(in) = NH4(+)(out). It catalyses the reaction Rb(+)(in) = Rb(+)(out). The catalysed reaction is Li(+)(in) = Li(+)(out). It carries out the reaction Cs(+)(in) = Cs(+)(out). Its function is as follows. Pore-forming subunit of the rod cyclic nucleotide-gated channel. Mediates rod photoresponses at dim light converting transient changes in intracellular cGMP levels into electrical signals. In the dark, cGMP levels are high and keep the channel open enabling a steady inward current carried by Na(+) and Ca(2+) ions that leads to membrane depolarization and neurotransmitter release from synaptic terminals. Upon photon absorption cGMP levels decline leading to channel closure and membrane hyperpolarization that ultimately slows neurotransmitter release and signals the presence of light, the end point of the phototransduction cascade. Conducts cGMP- and cAMP-gated ion currents, with permeability for monovalent and divalent cations. The selectivity for Ca(2+) over Na(+) increases with cGMP concentrations, whereas the selectivity among monovalent ions is independent of the cGMP levels. In Rattus norvegicus (Rat), this protein is Cyclic nucleotide-gated channel alpha-1.